Reading from the N-terminus, the 918-residue chain is MENDLSFGEDVMSYEEESDSAFPSPIRPTPPGHSGNYDLEQSRQEEDSNQAIQSIVVHTDPEAYLNLNTNANTRGDAQAYVELNELMGNSWQETGRWVGYEENFNPGTGKWGPSHVSYLTFKSLIQLRKIMSTGAIILDLQASSLSAVAEKVVDELRTKGEIRAADRDGLLRALLQRRSQSEGAVAQPLGGDIEMQTFSVTKQRDTTDSVEASIVLSGVMDSLEKPAVAFVRLGDSVVIEGALEAPVPVRFVFVLVGPSQGGVDYHESGRAMAALMADWVFSLEAYLAPTNKELTNAIADFMDCGIVIPPTEIQDEGMLQPIIDFQKKMLKDRLRPSDTRIIFGGGAKADEADEEPREDPLARTGIPFGGMIKDMKRRYRHYISDFTDALDPQVLAAVIFIYFAALSPAITFGGLLADKTEHMMGVSELMISTCVQGIIFAFIAAQPTLVIGFSGPLLVFEEAFFAFCKSQEIEYIVGRIWVGLWLVIIVVVIVAVEGSFLVKFISRFTQEIFSILISLIFIYETFSKLGKIFKAHPLVLNYEHLNDSLDNPFHPVVKEHIEYHEDGNKTVHEVIHERAYPNTALLSMCLMFGCFFIAYFLRQFKNGHFLPGPIRRMIGDFGVPIAIFFMIAVDITIEDAYTQKLVVPKGLMVSNPNARGWFINPLGEKKPFPAWMMGACCVPALLVFILIFLESQITTLIVSKPERKMVKGSGFHLDLLILVTMGGIASLFGVPWLSAATVRSVTHANALTVMSKGPKPEIEKVLEQRISGMLVAAMVGVSILLEPILKMIPMTALFGIFLYMGITSLSGIQMWDRMLLLIVPRKYYPADAYAQRVTTMKMHLFTLIQMVCLGALWMVKMSAFSLALPFVLILTIPLRMAITGTLFTDKEMKCLDASDGKVKFEEEPGEDMYESPLP.

Positions 1–48 (MENDLSFGEDVMSYEEESDSAFPSPIRPTPPGHSGNYDLEQSRQEEDS) are disordered. The Cytoplasmic portion of the chain corresponds to 1–392 (MENDLSFGED…ISDFTDALDP (392 aa)). Residues 393-416 (QVLAAVIFIYFAALSPAITFGGLL) form a helical membrane-spanning segment. Residues 417 to 424 (ADKTEHMM) lie on the Extracellular side of the membrane. Residues 425–445 (GVSELMISTCVQGIIFAFIAA) traverse the membrane as a helical segment. The Cytoplasmic segment spans residues 446-448 (QPT). Residues 449 to 465 (LVIGFSGPLLVFEEAFF) traverse the membrane as a discontinuously helical segment. Residues 466–474 (AFCKSQEIE) are Extracellular-facing. The helical transmembrane segment at 475 to 495 (YIVGRIWVGLWLVIIVVVIVA) threads the bilayer. Topologically, residues 496–507 (VEGSFLVKFISR) are cytoplasmic. The helical transmembrane segment at 508-530 (FTQEIFSILISLIFIYETFSKLG) threads the bilayer. The Extracellular portion of the chain corresponds to 531-583 (KIFKAHPLVLNYEHLNDSLDNPFHPVVKEHIEYHEDGNKTVHEVIHERAYPNT). 2 N-linked (GlcNAc...) asparagine glycosylation sites follow: Asn-546 and Asn-568. Residues 584 to 604 (ALLSMCLMFGCFFIAYFLRQF) traverse the membrane as a helical segment. Topologically, residues 605–615 (KNGHFLPGPIR) are cytoplasmic. Residues 616–636 (RMIGDFGVPIAIFFMIAVDIT) traverse the membrane as a helical segment. The Extracellular portion of the chain corresponds to 637–676 (IEDAYTQKLVVPKGLMVSNPNARGWFINPLGEKKPFPAWM). The helical transmembrane segment at 677 to 697 (MGACCVPALLVFILIFLESQI) threads the bilayer. Residues 698-713 (TTLIVSKPERKMVKGS) lie on the Cytoplasmic side of the membrane. The chain crosses the membrane as a helical span at residues 714 to 732 (GFHLDLLILVTMGGIASLF). The discontinuously helical transmembrane segment at 733–750 (GVPWLSAATVRSVTHANA) threads the bilayer. Residues 751–769 (LTVMSKGPKPEIEKVLEQR) are Cytoplasmic-facing. Helical transmembrane passes span 770–790 (ISGM…PILK) and 791–809 (MIPM…ITSL). The Cytoplasmic portion of the chain corresponds to 810 to 847 (SGIQMWDRMLLLIVPRKYYPADAYAQRVTTMKMHLFTL). Residues 848-878 (IQMVCLGALWMVKMSAFSLALPFVLILTIPL) constitute an intramembrane region (discontinuously helical). Residue Cys-852 is the site of S-palmitoyl cysteine attachment. The Cytoplasmic segment spans residues 879 to 918 (RMAITGTLFTDKEMKCLDASDGKVKFEEEPGEDMYESPLP).

This sequence belongs to the anion exchanger (TC 2.A.31) family. A dimer in solution, it spans the membrane asymmetrically and appears to be tetrameric.

The protein resides in the cell membrane. The enzyme catalyses hydrogencarbonate(in) + chloride(out) = hydrogencarbonate(out) + chloride(in). In terms of biological role, functions both as a transporter that mediates electroneutral anion exchange across the cell membrane and as a structural protein. Major integral membrane glycoprotein of the erythrocyte membrane; required for normal flexibility and stability of the erythrocyte membrane and for normal erythrocyte shape via the interactions of its cytoplasmic domain with cytoskeletal proteins, glycolytic enzymes, and hemoglobin. Functions as a transporter that mediates the 1:1 exchange of inorganic anions across the erythrocyte membrane. Mediates chloride-bicarbonate exchange in the kidney, and is required for normal acidification of the urine. This is Band 3 anion exchange protein (slc4a1) from Oncorhynchus mykiss (Rainbow trout).